The primary structure comprises 122 residues: Small ribosomal subunit protein bS6 (122 aa).

It belongs to the bacterial ribosomal protein bS6 family.

Functionally, binds together with bS18 to 16S ribosomal RNA. The sequence is that of Small ribosomal subunit protein bS6 from Neisseria gonorrhoeae (strain ATCC 700825 / FA 1090).